The chain runs to 338 residues: Ketol-acid reductoisomerase (NADP(+)) (338 aa).

One can recognise a KARI N-terminal Rossmann domain in the interval 3–183; sequence IELLYDADAD…GGARAGVIPT (181 aa). NADP(+)-binding positions include 26 to 29, R49, S52, S54, and 84 to 87; these read YGSQ and DTSQ. The active site involves H109. NADP(+) is bound at residue G135. A KARI C-terminal knotted domain is found at 184-329; the sequence is TFEAETVTDL…AKLRDLMSWV (146 aa). Mg(2+) is bound by residues D192, E196, E228, and E232. S253 contacts substrate.

It belongs to the ketol-acid reductoisomerase family. Mg(2+) serves as cofactor.

The catalysed reaction is (2R)-2,3-dihydroxy-3-methylbutanoate + NADP(+) = (2S)-2-acetolactate + NADPH + H(+). The enzyme catalyses (2R,3R)-2,3-dihydroxy-3-methylpentanoate + NADP(+) = (S)-2-ethyl-2-hydroxy-3-oxobutanoate + NADPH + H(+). The protein operates within amino-acid biosynthesis; L-isoleucine biosynthesis; L-isoleucine from 2-oxobutanoate: step 2/4. It functions in the pathway amino-acid biosynthesis; L-valine biosynthesis; L-valine from pyruvate: step 2/4. In terms of biological role, involved in the biosynthesis of branched-chain amino acids (BCAA). Catalyzes an alkyl-migration followed by a ketol-acid reduction of (S)-2-acetolactate (S2AL) to yield (R)-2,3-dihydroxy-isovalerate. In the isomerase reaction, S2AL is rearranged via a Mg-dependent methyl migration to produce 3-hydroxy-3-methyl-2-ketobutyrate (HMKB). In the reductase reaction, this 2-ketoacid undergoes a metal-dependent reduction by NADPH to yield (R)-2,3-dihydroxy-isovalerate. This Corynebacterium glutamicum (strain ATCC 13032 / DSM 20300 / JCM 1318 / BCRC 11384 / CCUG 27702 / LMG 3730 / NBRC 12168 / NCIMB 10025 / NRRL B-2784 / 534) protein is Ketol-acid reductoisomerase (NADP(+)).